We begin with the raw amino-acid sequence, 258 residues long: Imidazole glycerol phosphate synthase subunit HisF (258 aa).

Catalysis depends on residues Asp-11 and Asp-130.

It belongs to the HisA/HisF family. In terms of assembly, heterodimer of HisH and HisF.

The protein localises to the cytoplasm. The catalysed reaction is 5-[(5-phospho-1-deoxy-D-ribulos-1-ylimino)methylamino]-1-(5-phospho-beta-D-ribosyl)imidazole-4-carboxamide + L-glutamine = D-erythro-1-(imidazol-4-yl)glycerol 3-phosphate + 5-amino-1-(5-phospho-beta-D-ribosyl)imidazole-4-carboxamide + L-glutamate + H(+). It functions in the pathway amino-acid biosynthesis; L-histidine biosynthesis; L-histidine from 5-phospho-alpha-D-ribose 1-diphosphate: step 5/9. Functionally, IGPS catalyzes the conversion of PRFAR and glutamine to IGP, AICAR and glutamate. The HisF subunit catalyzes the cyclization activity that produces IGP and AICAR from PRFAR using the ammonia provided by the HisH subunit. The polypeptide is Imidazole glycerol phosphate synthase subunit HisF (Shigella flexneri serotype 5b (strain 8401)).